The following is a 466-amino-acid chain: MSNGTIVQCIGAVVDIQFPRDSMPKVYDALKLEDAADSFAEAGLTFEVQQQLGDGVVRTIALGSSDGLRRGMKVSNTGKPISVPVGHGTLGRIMDVLGRPIDEAGPVETDELRAIHQKAPKFDELSPSVELLETGIKVIDLICPFAKGGKVGLFGGAGVGKTVNMMELINNIAKQHSGLSVFAGVGERTREGNDFYHEMKDSNVLDKVAMVFGQMNEPPGNRLRVALTGLTMAERFRDEGRDILFFVDNIYRYTLAGTEVSALLGRMPSAVGYQPTLAEEMGRLQERITSTKVGSITSIQAVYVPADDLTDPSPATTFLHLDSTVVLSRDIAALGIYPAVDPLDSTSRQLDPLVVGEEHYSVARAVQQTLQKYKELRDIIAILGMDELSPDDKLAVARARKIQRFLSQPFHVAEVFTGSPGKYVSLKDTIAGFKAIVNGEYDHLPEQAFYMVGGIEEVLEKAKKLQ.

155–162 contacts ATP; sequence GGAGVGKT.

Belongs to the ATPase alpha/beta chains family. In terms of assembly, F-type ATPases have 2 components, CF(1) - the catalytic core - and CF(0) - the membrane proton channel. CF(1) has five subunits: alpha(3), beta(3), gamma(1), delta(1), epsilon(1). CF(0) has three main subunits: a(1), b(2) and c(9-12). The alpha and beta chains form an alternating ring which encloses part of the gamma chain. CF(1) is attached to CF(0) by a central stalk formed by the gamma and epsilon chains, while a peripheral stalk is formed by the delta and b chains.

It is found in the cell inner membrane. It carries out the reaction ATP + H2O + 4 H(+)(in) = ADP + phosphate + 5 H(+)(out). Its function is as follows. Produces ATP from ADP in the presence of a proton gradient across the membrane. The catalytic sites are hosted primarily by the beta subunits. This chain is ATP synthase subunit beta, found in Azoarcus sp. (strain BH72).